Consider the following 193-residue polypeptide: Urease accessory protein UreE (193 aa).

Residues 138-193 (RGAYHSHGAHSHDQGHAAHDHGNEHKHDHGHDHVHGPGCDHDHDHDHGHHHDHKHD) are disordered. Residues 147–193 (HSHDQGHAAHDHGNEHKHDHGHDHVHGPGCDHDHDHDHGHHHDHKHD) are compositionally biased toward basic and acidic residues.

It belongs to the UreE family.

It is found in the cytoplasm. In terms of biological role, involved in urease metallocenter assembly. Binds nickel. Probably functions as a nickel donor during metallocenter assembly. This is Urease accessory protein UreE from Rhizobium leguminosarum bv. trifolii (strain WSM2304).